The sequence spans 95 residues: Integration host factor subunit beta (95 aa).

Positions 57–76 (APRTGRNPKTGDKVDLEGKY) are disordered. Basic and acidic residues predominate over residues 65–76 (KTGDKVDLEGKY).

It belongs to the bacterial histone-like protein family. As to quaternary structure, heterodimer of an alpha and a beta chain.

In terms of biological role, this protein is one of the two subunits of integration host factor, a specific DNA-binding protein that functions in genetic recombination as well as in transcriptional and translational control. The chain is Integration host factor subunit beta from Enterobacter sp. (strain 638).